The primary structure comprises 150 residues: SsrA-binding protein (150 aa).

It belongs to the SmpB family.

The protein localises to the cytoplasm. Its function is as follows. Required for rescue of stalled ribosomes mediated by trans-translation. Binds to transfer-messenger RNA (tmRNA), required for stable association of tmRNA with ribosomes. tmRNA and SmpB together mimic tRNA shape, replacing the anticodon stem-loop with SmpB. tmRNA is encoded by the ssrA gene; the 2 termini fold to resemble tRNA(Ala) and it encodes a 'tag peptide', a short internal open reading frame. During trans-translation Ala-aminoacylated tmRNA acts like a tRNA, entering the A-site of stalled ribosomes, displacing the stalled mRNA. The ribosome then switches to translate the ORF on the tmRNA; the nascent peptide is terminated with the 'tag peptide' encoded by the tmRNA and targeted for degradation. The ribosome is freed to recommence translation, which seems to be the essential function of trans-translation. The sequence is that of SsrA-binding protein from Bacteroides thetaiotaomicron (strain ATCC 29148 / DSM 2079 / JCM 5827 / CCUG 10774 / NCTC 10582 / VPI-5482 / E50).